Here is a 157-residue protein sequence, read N- to C-terminus: uncharacterized protein (157 aa).

Helical transmembrane passes span 29-49, 52-72, 93-113, and 117-137; these read LLII…PAYF, VLHV…GFGI, LGSV…RTWL, and NEMF…TITA.

The protein resides in the cell membrane. This is an uncharacterized protein from Bacillus subtilis (strain 168).